Reading from the N-terminus, the 429-residue chain is 4-hydroxy-3-methylbut-2-en-1-yl diphosphate synthase (flavodoxin) (429 aa).

[4Fe-4S] cluster-binding residues include cysteine 323, cysteine 326, cysteine 369, and glutamate 376.

Belongs to the IspG family. Requires [4Fe-4S] cluster as cofactor.

It catalyses the reaction (2E)-4-hydroxy-3-methylbut-2-enyl diphosphate + oxidized [flavodoxin] + H2O + 2 H(+) = 2-C-methyl-D-erythritol 2,4-cyclic diphosphate + reduced [flavodoxin]. Its pathway is isoprenoid biosynthesis; isopentenyl diphosphate biosynthesis via DXP pathway; isopentenyl diphosphate from 1-deoxy-D-xylulose 5-phosphate: step 5/6. Functionally, converts 2C-methyl-D-erythritol 2,4-cyclodiphosphate (ME-2,4cPP) into 1-hydroxy-2-methyl-2-(E)-butenyl 4-diphosphate. This Wolbachia sp. subsp. Brugia malayi (strain TRS) protein is 4-hydroxy-3-methylbut-2-en-1-yl diphosphate synthase (flavodoxin).